A 156-amino-acid chain; its full sequence is METMIINQQNKINYTKEMQQVILNVANAVAKMVKLSPNTELSVMIVDNSYIKELNLIYRGENNPTDVLSFAMNELSEEEMDLDLPGEVNVLGDIVVSLEKAVSQSEEYGHSAERELGYLIAHGMLHLLGYDHENEEERNLMRNLEERIMHKVKLER.

3 residues coordinate Zn(2+): H122, H126, and H132.

Belongs to the endoribonuclease YbeY family. The cofactor is Zn(2+).

The protein localises to the cytoplasm. Its function is as follows. Single strand-specific metallo-endoribonuclease involved in late-stage 70S ribosome quality control and in maturation of the 3' terminus of the 16S rRNA. The chain is Endoribonuclease YbeY from Syntrophomonas wolfei subsp. wolfei (strain DSM 2245B / Goettingen).